A 292-amino-acid polypeptide reads, in one-letter code: Nucleotide-binding protein Ldb0621 (292 aa).

14 to 21 (GMSGAGKT) serves as a coordination point for ATP. A GTP-binding site is contributed by 64–67 (DLRV).

It belongs to the RapZ-like family.

Functionally, displays ATPase and GTPase activities. This is Nucleotide-binding protein Ldb0621 from Lactobacillus delbrueckii subsp. bulgaricus (strain ATCC 11842 / DSM 20081 / BCRC 10696 / JCM 1002 / NBRC 13953 / NCIMB 11778 / NCTC 12712 / WDCM 00102 / Lb 14).